Consider the following 520-residue polypeptide: Ubiquitin carboxyl-terminal hydrolase 3 (520 aa).

M1 bears the N-acetylmethionine mark. The UBP-type zinc finger occupies 1-121 (MECPHLSSSV…QKVREHLQNL (121 aa)). Residues C3, H5, C29, C32, C41, C44, C49, H56, H60, H82, C95, and C98 each coordinate Zn(2+). The USP domain maps to 159-511 (TGLRNLGNTC…KAYILFYVEH (353 aa)). The active-site Nucleophile is C168. Catalysis depends on H471, which acts as the Proton acceptor.

The protein belongs to the peptidase C19 family. USP3 subfamily. In terms of assembly, interacts (via UBP-type domain) with H2A; the interaction is less efficient than with monoubiquitinated H2A. As to expression, expressed in all tissues examined, with strongest expression in pancreas.

The protein resides in the nucleus. The protein localises to the cytoplasm. The catalysed reaction is Thiol-dependent hydrolysis of ester, thioester, amide, peptide and isopeptide bonds formed by the C-terminal Gly of ubiquitin (a 76-residue protein attached to proteins as an intracellular targeting signal).. Its function is as follows. Deubiquitinase that plays a role in several cellular processes including transcriptional regulation, cell cycle progression or innate immunity. In response to DNA damage, deubiquitinates monoubiquitinated target proteins such as histone H2A and H2AX and thereby counteracts RNF168- and RNF8-mediated ubiquitination. In turn, participates in the recruitment of DNA damage repair factors to DNA break sites. Required for proper progression through S phase and subsequent mitotic entry. Acts as a positive regulator of TP53 by deubiquitinating and stabilizing it to promote normal cell proliferation and transformation. Participates in establishing tolerance innate immune memory through non-transcriptional feedback. Mechanistically, negatively regulates TLR-induced NF-kappa-B signaling by targeting and removing the 'Lys-63'-linked polyubiquitin chains on MYD88. Negatively regulates the activation of type I interferon signaling by mediating 'Lys-63'-linked polyubiquitin chains on RIGI and IFIH1. Also deubiquinates ASC/PYCARD, the central adapter mediating the assembly and activation of most inflammasomes, and thereby promotes inflammasome activation. In Homo sapiens (Human), this protein is Ubiquitin carboxyl-terminal hydrolase 3 (USP3).